Consider the following 254-residue polypeptide: Thiazole synthase (254 aa).

Residue lysine 93 is the Schiff-base intermediate with DXP of the active site. Residues glycine 154, 181–182, and 203–204 contribute to the 1-deoxy-D-xylulose 5-phosphate site; these read AG and NT.

It belongs to the ThiG family. As to quaternary structure, homotetramer. Forms heterodimers with either ThiH or ThiS.

It localises to the cytoplasm. It carries out the reaction [ThiS sulfur-carrier protein]-C-terminal-Gly-aminoethanethioate + 2-iminoacetate + 1-deoxy-D-xylulose 5-phosphate = [ThiS sulfur-carrier protein]-C-terminal Gly-Gly + 2-[(2R,5Z)-2-carboxy-4-methylthiazol-5(2H)-ylidene]ethyl phosphate + 2 H2O + H(+). Its pathway is cofactor biosynthesis; thiamine diphosphate biosynthesis. Catalyzes the rearrangement of 1-deoxy-D-xylulose 5-phosphate (DXP) to produce the thiazole phosphate moiety of thiamine. Sulfur is provided by the thiocarboxylate moiety of the carrier protein ThiS. In vitro, sulfur can be provided by H(2)S. The chain is Thiazole synthase from Ruegeria pomeroyi (strain ATCC 700808 / DSM 15171 / DSS-3) (Silicibacter pomeroyi).